Here is a 677-residue protein sequence, read N- to C-terminus: Penicillin-binding protein activator LpoA (677 aa).

A signal peptide spans 1–26 (MLPSKIVRHKAGRFVPVLLAGLILAA). Cys27 carries N-palmitoyl cysteine lipidation. The S-diacylglycerol cysteine moiety is linked to residue Cys27. The tract at residues 309-359 (QPADANAVVSPSANPAAAQQSGTAQQPATTQQQPQQQPAAEPASNAQVKVY) is disordered. Positions 313–355 (ANAVVSPSANPAAAQQSGTAQQPATTQQQPQQQPAAEPASNAQ) are enriched in low complexity.

The protein belongs to the LpoA family. In terms of assembly, interacts with PBP1a.

It localises to the cell outer membrane. Regulator of peptidoglycan synthesis that is essential for the function of penicillin-binding protein 1A (PBP1a). This Pantoea ananatis (strain LMG 20103) protein is Penicillin-binding protein activator LpoA.